A 398-amino-acid chain; its full sequence is Leucine aminopeptidase 1 (398 aa).

The first 20 residues, 1 to 20, serve as a signal peptide directing secretion; that stretch reads MKFLQTSLIAAALPAALVSG. Positions 21–87 are excised as a propeptide; the sequence is RFVIENEGDN…LRAWTQSQAS (67 aa). Residue N179 is glycosylated (N-linked (GlcNAc...) asparagine). Residues H187, D206, E245, and D272 each contribute to the Zn(2+) site. C321 and C325 are oxidised to a cystine. H354 provides a ligand contact to Zn(2+).

It belongs to the peptidase M28 family. M28E subfamily. Monomer. Zn(2+) is required as a cofactor.

It localises to the secreted. In terms of biological role, extracellular aminopeptidase that allows assimilation of proteinaceous substrates. The chain is Leucine aminopeptidase 1 (lap1) from Trichoderma harzianum (Hypocrea lixii).